Here is a 218-residue protein sequence, read N- to C-terminus: Enhancer of split M2 protein (218 aa).

The span at 1–25 (MYLDTKNLTASSTSALTAATASNSK) shows a compositional bias: low complexity. Disordered stretches follow at residues 1–30 (MYLD…TRRM), 64–86 (NTQQ…KSTP), and 137–164 (GRNC…SSSA). Residues 147-163 (SSNINSSSSSSNMNSSS) show a composition bias toward low complexity.

Part of the Notch signaling pathway. The polypeptide is Enhancer of split M2 protein (Drosophila melanogaster (Fruit fly)).